Here is a 323-residue protein sequence, read N- to C-terminus: Methionyl-tRNA formyltransferase (323 aa).

Residue 117 to 120 (SLLP) coordinates (6S)-5,6,7,8-tetrahydrofolate.

The protein belongs to the Fmt family.

The catalysed reaction is L-methionyl-tRNA(fMet) + (6R)-10-formyltetrahydrofolate = N-formyl-L-methionyl-tRNA(fMet) + (6S)-5,6,7,8-tetrahydrofolate + H(+). Its function is as follows. Attaches a formyl group to the free amino group of methionyl-tRNA(fMet). The formyl group appears to play a dual role in the initiator identity of N-formylmethionyl-tRNA by promoting its recognition by IF2 and preventing the misappropriation of this tRNA by the elongation apparatus. The sequence is that of Methionyl-tRNA formyltransferase from Albidiferax ferrireducens (strain ATCC BAA-621 / DSM 15236 / T118) (Rhodoferax ferrireducens).